A 659-amino-acid chain; its full sequence is UvrABC system protein B (659 aa).

One can recognise a Helicase ATP-binding domain in the interval 25-182 (QSIENGNRGQ…KKLIEIQYER (158 aa)). 38–45 (GVTGSGKT) is a binding site for ATP. Residues 91–114 (YYDYYQPEAYVPQTDTFIEKDASI) carry the Beta-hairpin motif. The 154-residue stretch at 429 to 582 (QIDDLYGEIQ…QMEYNEEHNI (154 aa)) folds into the Helicase C-terminal domain. The 36-residue stretch at 622 to 657 (EKLIEQYEEEMKEAAKNLQFERAAELRDIIKDLKEN) folds into the UVR domain.

Belongs to the UvrB family. As to quaternary structure, forms a heterotetramer with UvrA during the search for lesions. Interacts with UvrC in an incision complex.

It is found in the cytoplasm. Functionally, the UvrABC repair system catalyzes the recognition and processing of DNA lesions. A damage recognition complex composed of 2 UvrA and 2 UvrB subunits scans DNA for abnormalities. Upon binding of the UvrA(2)B(2) complex to a putative damaged site, the DNA wraps around one UvrB monomer. DNA wrap is dependent on ATP binding by UvrB and probably causes local melting of the DNA helix, facilitating insertion of UvrB beta-hairpin between the DNA strands. Then UvrB probes one DNA strand for the presence of a lesion. If a lesion is found the UvrA subunits dissociate and the UvrB-DNA preincision complex is formed. This complex is subsequently bound by UvrC and the second UvrB is released. If no lesion is found, the DNA wraps around the other UvrB subunit that will check the other stand for damage. This Clostridium perfringens (strain SM101 / Type A) protein is UvrABC system protein B.